The following is a 49-amino-acid chain: Sperm protamine P1 (49 aa).

Belongs to the protamine P1 family. As to expression, testis.

It is found in the nucleus. It localises to the chromosome. Its function is as follows. Protamines substitute for histones in the chromatin of sperm during the haploid phase of spermatogenesis. They compact sperm DNA into a highly condensed, stable and inactive complex. The chain is Sperm protamine P1 (PRM1) from Rhinopoma hardwickii (Lesser mouse-tailed bat).